Here is a 308-residue protein sequence, read N- to C-terminus: 2-methylisocitrate lyase (308 aa).

Residue 54–56 (SGG) coordinates substrate. 2 residues coordinate Mg(2+): Asp94 and Asp96. Residues 131–132 (CG), Arg166, Glu196, 224–226 (NIT), Arg255, and Arg284 each bind substrate.

The protein belongs to the isocitrate lyase/PEP mutase superfamily. Methylisocitrate lyase family. As to quaternary structure, homotetramer; dimer of dimers. It depends on Mg(2+) as a cofactor.

It catalyses the reaction (2S,3R)-3-hydroxybutane-1,2,3-tricarboxylate = pyruvate + succinate. Its pathway is organic acid metabolism; propanoate degradation. In terms of biological role, involved in the catabolism of short chain fatty acids (SCFA) via the 2-methylcitrate cycle I (propionate degradation route). Catalyzes the thermodynamically favored C-C bond cleavage reaction of (2R,3S)-2-methylisocitrate to yield pyruvate and succinate via an alpha-carboxy-carbanion intermediate. This chain is 2-methylisocitrate lyase, found in Vibrio cholerae serotype O1 (strain ATCC 39315 / El Tor Inaba N16961).